A 133-amino-acid chain; its full sequence is Ribosome-binding factor A (133 aa).

It belongs to the RbfA family. As to quaternary structure, monomer. Binds 30S ribosomal subunits, but not 50S ribosomal subunits or 70S ribosomes.

The protein localises to the cytoplasm. Functionally, one of several proteins that assist in the late maturation steps of the functional core of the 30S ribosomal subunit. Associates with free 30S ribosomal subunits (but not with 30S subunits that are part of 70S ribosomes or polysomes). Required for efficient processing of 16S rRNA. May interact with the 5'-terminal helix region of 16S rRNA. The chain is Ribosome-binding factor A from Pseudomonas fluorescens (strain ATCC BAA-477 / NRRL B-23932 / Pf-5).